Here is a 218-residue protein sequence, read N- to C-terminus: Phosphoglycolate phosphatase (218 aa).

Asp-7 functions as the Nucleophile in the catalytic mechanism. Asp-7, Asp-9, and Asp-167 together coordinate Mg(2+).

The protein belongs to the HAD-like hydrolase superfamily. CbbY/CbbZ/Gph/YieH family. Mg(2+) is required as a cofactor.

The catalysed reaction is 2-phosphoglycolate + H2O = glycolate + phosphate. It functions in the pathway organic acid metabolism; glycolate biosynthesis; glycolate from 2-phosphoglycolate: step 1/1. Functionally, specifically catalyzes the dephosphorylation of 2-phosphoglycolate. Is involved in the dissimilation of the intracellular 2-phosphoglycolate formed during the DNA repair of 3'-phosphoglycolate ends, a major class of DNA lesions induced by oxidative stress. This is Phosphoglycolate phosphatase from Cereibacter sphaeroides (Rhodobacter sphaeroides).